Reading from the N-terminus, the 515-residue chain is 1-pyrroline-5-carboxylate dehydrogenase (515 aa).

Active-site residues include Glu286 and Cys320.

Belongs to the aldehyde dehydrogenase family. RocA subfamily.

It carries out the reaction L-glutamate 5-semialdehyde + NAD(+) + H2O = L-glutamate + NADH + 2 H(+). Its pathway is amino-acid degradation; L-proline degradation into L-glutamate; L-glutamate from L-proline: step 2/2. This Bacillus cytotoxicus (strain DSM 22905 / CIP 110041 / 391-98 / NVH 391-98) protein is 1-pyrroline-5-carboxylate dehydrogenase.